The chain runs to 277 residues: Urease accessory protein UreD (277 aa).

Belongs to the UreD family. UreD, UreF and UreG form a complex that acts as a GTP-hydrolysis-dependent molecular chaperone, activating the urease apoprotein by helping to assemble the nickel containing metallocenter of UreC. The UreE protein probably delivers the nickel.

It is found in the cytoplasm. Functionally, required for maturation of urease via the functional incorporation of the urease nickel metallocenter. The sequence is that of Urease accessory protein UreD from Pseudomonas entomophila (strain L48).